The primary structure comprises 228 residues: UPF0758 protein RALTA_A2508 (228 aa).

Residues 102–224 enclose the MPN domain; sequence GFDSPDSVRS…IRSLAESCER (123 aa). Residues His173, His175, and Asp186 each coordinate Zn(2+). A JAMM motif motif is present at residues 173–186; the sequence is HNHPRGTTAPSQSD.

This sequence belongs to the UPF0758 family.

The polypeptide is UPF0758 protein RALTA_A2508 (Cupriavidus taiwanensis (strain DSM 17343 / BCRC 17206 / CCUG 44338 / CIP 107171 / LMG 19424 / R1) (Ralstonia taiwanensis (strain LMG 19424))).